The chain runs to 707 residues: DCC-interacting protein 13-alpha (707 aa).

Residues 1-428 are required for RAB5A binding; sequence MPGIDKLPIE…PPTARTSSSG (428 aa). Residues 3–268 enclose the BAR domain; sequence GIDKLPIEET…DPLYLPDPDP (266 aa). Residues 234–257 adopt a coiled-coil conformation; it reads QNVRREMDGDVETMQQTIEDLEVA. The 99-residue stretch at 277–375 folds into the PH domain; the sequence is LTRKAGYLNA…WICTINNISK (99 aa). Disordered stretches follow at residues 397 to 433, 466 to 490, and 636 to 707; these read AVTPSPSFQQRHESLRPGGQSRPPTARTSSSGSLGSE, GQAKAFGQGGRRTNPFGESGGSTKS, and EKQK…ESEA. Phosphothreonine is present on Thr-399. Ser-401 carries the phosphoserine modification. The short motif at 403–414 is the F&amp;H element; the sequence is SFQQRHESLRPG. The residue at position 410 (Ser-410) is a Phosphoserine; by PKA. One can recognise a PID domain in the interval 495–655; sequence SILHQLFIVR…EKQQKELSKQ (161 aa). Positions 620 to 670 form a coiled coil; the sequence is LAKQIALHAELDRRASEKQKEIERVKEKQQKELSKQKQIEKDLEEQSRLIA. The span at 636–666 shows a compositional bias: basic and acidic residues; that stretch reads EKQKEIERVKEKQQKELSKQKQIEKDLEEQS. Low complexity predominate over residues 679–691; sequence GSEGQLVLSSSQS. Ser-691 and Ser-694 each carry phosphoserine. Basic and acidic residues predominate over residues 698–707; sequence EEGKKRESEA.

As to quaternary structure, homodimer. Binds RAB5A/Rab5 through an N-terminal domain. This interaction is essential for its recruitment to endosomal membranes as well as its role in cell proliferation. Binds DCC and the catalytic domain of the inactive form of AKT2 through its PID domain. Binds PIK3CA and subunits of the NuRD/MeCP1 complex. Interacts with OCRL and INPP5B. Interacts with NTRK2. Interacts with APPL2; interaction is independent of follicle stimulating hormone stimulation; interaction is decreased by adiponectin in a time-dependent manner. Forms a complex with APPL2 and RUVBL2. Forms a complex comprising APPL2, RUVBL2, CTNNB1, HDAC1 and HDAC2; interaction reduces interaction between CTNNB1, HDAC1, HDAC2 and RUVBL2 leading to the decrease of deacetylase activity of this complex; affects the recruitment of repressive complexes to the Wnt target genes. Interacts with ANXA2. Interacts with TGFBR1; interaction is TGF beta dependent; mediates trafficking of the TGFBR1 from the endosomes to the nucleus via microtubules in a TRAF6-dependent manner. Interacts with PRKCZ. Interacts with PIK3R1 and APPL2. Interacts with ADIPOR1; ADIPOQ enhances this interaction; inhibites adiponectin-stimulated binding of APPL2 to ADIPOR1. Post-translationally, phosphorylation at Ser-410 by PKA severely impairs binding to OCRL. Expressed in insulin-target tissues including skeletal muscle, liver, fat, and brain.

The protein resides in the early endosome membrane. The protein localises to the nucleus. Its subcellular location is the cytoplasm. It is found in the endosome. It localises to the cell projection. The protein resides in the ruffle. The protein localises to the cytoplasmic vesicle. Its subcellular location is the phagosome. Multifunctional adapter protein that binds to various membrane receptors, nuclear factors and signaling proteins to regulate many processes, such as cell proliferation, immune response, endosomal trafficking and cell metabolism. Regulates signaling pathway leading to cell proliferation through interaction with RAB5A and subunits of the NuRD/MeCP1 complex. Functions as a positive regulator of innate immune response via activation of AKT1 signaling pathway by forming a complex with APPL1 and PIK3R1. Inhibits Fc-gamma receptor-mediated phagocytosis through PI3K/Akt signaling in macrophages. Regulates TLR4 signaling in activated macrophages. Involved in trafficking of the TGFBR1 from the endosomes to the nucleus via microtubules in a TRAF6-dependent manner. Plays a role in cell metabolism by regulating adiponecting and insulin signaling pathways. Required for fibroblast migration through HGF cell signaling. Positive regulator of beta-catenin/TCF-dependent transcription through direct interaction with RUVBL2/reptin resulting in the relief of RUVBL2-mediated repression of beta-catenin/TCF target genes by modulating the interactions within the beta-catenin-reptin-HDAC complex. In Mus musculus (Mouse), this protein is DCC-interacting protein 13-alpha.